We begin with the raw amino-acid sequence, 287 residues long: MEMO1 family protein MJ0403 (287 aa).

This sequence belongs to the MEMO1 family.

In Methanocaldococcus jannaschii (strain ATCC 43067 / DSM 2661 / JAL-1 / JCM 10045 / NBRC 100440) (Methanococcus jannaschii), this protein is MEMO1 family protein MJ0403.